A 62-amino-acid polypeptide reads, in one-letter code: Large ribosomal subunit protein eL19 (62 aa).

The protein belongs to the eukaryotic ribosomal protein eL19 family.

The protein is Large ribosomal subunit protein eL19 (RPL19) of Zea mays (Maize).